We begin with the raw amino-acid sequence, 95 residues long: Small ribosomal subunit protein uS19 (95 aa).

This sequence belongs to the universal ribosomal protein uS19 family.

Protein S19 forms a complex with S13 that binds strongly to the 16S ribosomal RNA. The sequence is that of Small ribosomal subunit protein uS19 from Syntrophobacter fumaroxidans (strain DSM 10017 / MPOB).